The following is a 226-amino-acid chain: DELTA-alicitoxin-Pse1b (226 aa).

The signal sequence occupies residues 1 to 21 (MRHFVVFLYMFLALSIPTAFA). A propeptide spanning residues 22–45 (KKHIVTKKGNHQDITNDNEGENAE) is cleaved from the precursor. The segment at 50-59 (TVAGAVIAGG) is plays an important role in the hemolytic activity. An N-terminal region region spans residues 58–77 (GGELALKILTKILYEIGKID). 6 residues coordinate phosphocholine: S101, V134, S152, P154, Y180, and Y184. A trp-rich region, which is important for the binding to lipid membrane region spans residues 152–167 (SVPFDYNLYSNWWNVK).

It belongs to the actinoporin family. Sea anemone subfamily. Octamer or nonamer in membranes. Monomer in the soluble state.

The protein localises to the secreted. It is found in the nematocyst. The protein resides in the target cell membrane. Its function is as follows. Pore-forming protein that forms cations-selective hydrophilic pores of around 1 nm and causes cytolysis. Pore formation is a multi-step process that involves specific recognition of membrane sphingomyelin (but neither cholesterol nor phosphatidylcholine) using aromatic rich region and adjacent phosphocholine (POC) binding site, firm binding to the membrane (mainly driven by hydrophobic interactions) accompanied by the transfer of the N-terminal region to the lipid-water interface and finally pore formation after oligomerization of monomers. The chain is DELTA-alicitoxin-Pse1b from Phyllodiscus semoni (Night anemone).